Here is a 280-residue protein sequence, read N- to C-terminus: Polyamine aminopropyltransferase 2 (280 aa).

The region spanning 2–237 (ELWLDEALEL…GIIGFTYCSK (236 aa)) is the PABS domain. Q33 lines the S-methyl-5'-thioadenosine pocket. Spermidine is bound by residues H64 and D88. S-methyl-5'-thioadenosine is bound by residues E108 and 139-140 (DG). The active-site Proton acceptor is the D157. 157–160 (DSSD) provides a ligand contact to spermidine. Residue P164 coordinates S-methyl-5'-thioadenosine.

Belongs to the spermidine/spermine synthase family. As to quaternary structure, homodimer or homotetramer.

Its subcellular location is the cytoplasm. It carries out the reaction S-adenosyl 3-(methylsulfanyl)propylamine + putrescine = S-methyl-5'-thioadenosine + spermidine + H(+). Its pathway is amine and polyamine biosynthesis; spermidine biosynthesis; spermidine from putrescine: step 1/1. Catalyzes the irreversible transfer of a propylamine group from the amino donor S-adenosylmethioninamine (decarboxy-AdoMet) to putrescine (1,4-diaminobutane) to yield spermidine. The chain is Polyamine aminopropyltransferase 2 from Leptospira interrogans serogroup Icterohaemorrhagiae serovar Lai (strain 56601).